Consider the following 528-residue polypeptide: MSMKWTSALLLIQLSCYLSFGSCGKVLVWPTEFSHWMNIKTILDELVQRGHEVTVLAYSTSILPDPNNPSPLKFEICPTSLTETEFQDSVTQLVKRWSDIRKDTFWPHFLHVQEMMWTYGDMIRKFCKDVVSNKKLMKKLQESRFDVVLADAISPCGELLAELLKIPFVYSLRFSPGYALEKHGGGFLFPPSYVPVTMSELRDQMTFMERVQNMIYMVYFDFWFQVWDVKNWDQFYSKVLGRPTTLFEIMAKAEIWLIRNYWDFQFPHPLLPNVEFVGGLHCKPAKPLPKEMEEFVQSSGDNGVVVFSLGSMVSNMSEERANVIASALAKIPQKVLWRFDGNKPDTLGLNTQLYKWLPQNDLLGHPKTRAFITHGGANGIYEAIYHGIPMVGVPLFADQPDNIAHMKAKGAAVRLDFDTMSSTDLLNALKTVINDPIYKENAMKLSSIHHDQPVKPLDRAVFWIEFVMRHKGAKHLRVAAHDLTWFQYHSLDVIGFLLACVATVIFIITKCLFCVWKFVRTRKKGKRD.

An N-terminal signal peptide occupies residues 1–21; the sequence is MSMKWTSALLLIQLSCYLSFG. Residue K135 is modified to N6-succinyllysine. Residue N315 is glycosylated (N-linked (GlcNAc...) asparagine). The helical transmembrane segment at 493–513 threads the bilayer; it reads VIGFLLACVATVIFIITKCLF.

It belongs to the UDP-glycosyltransferase family. Expressed in liver, ovary, prostate, colon, kidney, pancreas, brain, cerebellum, mammary gland and epididymis. Not expressed in small intestine, spleen, bladder, adrenal gland and testis.

The protein localises to the microsome membrane. It is found in the endoplasmic reticulum membrane. The catalysed reaction is glucuronate acceptor + UDP-alpha-D-glucuronate = acceptor beta-D-glucuronoside + UDP + H(+). In terms of biological role, UDPGT is of major importance in the conjugation and subsequent elimination of potentially toxic xenobiotics and endogenous compounds. This isozyme displays activity toward several classes of xenobiotic substrates: eugenol, 4-methyllumbelliferone, p-nitrophenol, 1-naphthol, p,p'-biphenol, naringenin and o,o'-biphenol. Active also on 3a-hydroxy and 17b-hydroxy positions of steroids. Contributes to the formation of androgen glucuronide in extrahepatic steroid target tissues such as the prostate. This is UDP-glucuronosyltransferase 2B19 (UGT2B19) from Macaca fascicularis (Crab-eating macaque).